Reading from the N-terminus, the 1361-residue chain is Xanthine dehydrogenase 1 (1361 aa).

A 2Fe-2S ferredoxin-type domain is found at T15–L101. [2Fe-2S] cluster is bound by residues C53, C58, C61, C83, C123, C126, C159, and C161. Positions R257–P442 constitute an FAD-binding PCMH-type domain. FAD is bound by residues L285–V292, F365, C375–N379, D388, L432, and K450. Positions 796 and 827 each coordinate Mo-molybdopterin. Substrate contacts are provided by E831 and R909. R941 is a binding site for Mo-molybdopterin. Substrate-binding residues include F943 and T1039. A1108 contacts Mo-molybdopterin. Catalysis depends on E1297, which acts as the Proton acceptor.

Belongs to the xanthine dehydrogenase family. In terms of assembly, homodimer. Requires [2Fe-2S] cluster as cofactor. The cofactor is FAD. Mo-molybdopterin serves as cofactor. As to expression, expressed in roots, leaves, stems, flowers and siliques.

It carries out the reaction xanthine + NAD(+) + H2O = urate + NADH + H(+). The enzyme catalyses hypoxanthine + NAD(+) + H2O = xanthine + NADH + H(+). Functionally, key enzyme involved in purine catabolism. Catalyzes the oxidation of hypoxanthine to xanthine and the oxidation of xanthine to urate. Regulates the level of ureides and plays an important role during plant growth and development, senescence and response to stresses. Possesses NADH oxidase activity and may contribute to the generation of superoxide anions in planta. This is Xanthine dehydrogenase 1 (XDH1) from Arabidopsis thaliana (Mouse-ear cress).